We begin with the raw amino-acid sequence, 430 residues long: Histidinol dehydrogenase (430 aa).

Residues Tyr-124, Gln-185, and Asn-208 each coordinate NAD(+). Ser-233, Gln-255, and His-258 together coordinate substrate. 2 residues coordinate Zn(2+): Gln-255 and His-258. Active-site proton acceptor residues include Glu-324 and His-325. Residues His-325, Asp-358, Glu-412, and His-418 each contribute to the substrate site. Asp-358 contributes to the Zn(2+) binding site. His-418 is a binding site for Zn(2+).

This sequence belongs to the histidinol dehydrogenase family. It depends on Zn(2+) as a cofactor.

The catalysed reaction is L-histidinol + 2 NAD(+) + H2O = L-histidine + 2 NADH + 3 H(+). It participates in amino-acid biosynthesis; L-histidine biosynthesis; L-histidine from 5-phospho-alpha-D-ribose 1-diphosphate: step 9/9. Its function is as follows. Catalyzes the sequential NAD-dependent oxidations of L-histidinol to L-histidinaldehyde and then to L-histidine. This is Histidinol dehydrogenase from Leptospira biflexa serovar Patoc (strain Patoc 1 / Ames).